Reading from the N-terminus, the 378-residue chain is TelA-like protein SAB1262 (378 aa).

Belongs to the TelA family.

The polypeptide is TelA-like protein SAB1262 (Staphylococcus aureus (strain bovine RF122 / ET3-1)).